We begin with the raw amino-acid sequence, 70 residues long: Myotoxin (70 aa).

The N-terminal stretch at 1–22 is a signal peptide; sequence MKILYLLFAFLFLAFLSEPGNA. 3 disulfides stabilise this stretch: Cys-26-Cys-58, Cys-33-Cys-52, and Cys-40-Cys-59.

It belongs to the crotamine-myotoxin family. As to quaternary structure, monomer. As to expression, expressed by the venom gland.

The protein resides in the secreted. In terms of biological role, cationic peptide that possesses multiple functions. It acts as a cell-penetrating peptide (CPP), and as a potent voltage-gated potassium channel (Kv) inhibitor. It exhibits antimicrobial activities, hind limb paralysis, and severe muscle necrosis by a non-enzymatic mechanism. This Crotalus helleri (Southern pacific rattlesnake) protein is Myotoxin.